A 133-amino-acid chain; its full sequence is Ribosome-binding factor A (133 aa).

This sequence belongs to the RbfA family. In terms of assembly, monomer. Binds 30S ribosomal subunits, but not 50S ribosomal subunits or 70S ribosomes.

It is found in the cytoplasm. In terms of biological role, one of several proteins that assist in the late maturation steps of the functional core of the 30S ribosomal subunit. Associates with free 30S ribosomal subunits (but not with 30S subunits that are part of 70S ribosomes or polysomes). Required for efficient processing of 16S rRNA. May interact with the 5'-terminal helix region of 16S rRNA. The chain is Ribosome-binding factor A from Klebsiella pneumoniae (strain 342).